The sequence spans 346 residues: 3 beta-hydroxysteroid dehydrogenase/Delta 5--&gt;4-isomerase (346 aa).

Tyr147 functions as the Proton acceptor in the catalytic mechanism. Lys151 lines the NAD(+) pocket.

Belongs to the 3-beta-HSD family.

It carries out the reaction a 3beta-hydroxy-Delta(5)-steroid + NAD(+) = a 3-oxo-Delta(5)-steroid + NADH + H(+). The enzyme catalyses a 3-oxo-Delta(5)-steroid = a 3-oxo-Delta(4)-steroid. It functions in the pathway lipid metabolism; steroid biosynthesis. Functionally, catalyzes the oxidative conversion of Delta(5)-ene-3-beta-hydroxy steroid, and the oxidative conversion of ketosteroids. The 3-beta-HSD enzymatic system plays a crucial role in the biosynthesis of all classes of hormonal steroids. During viral infection, steroid production contributes to virulence by inhibiting the host inflammatory response. The sequence is that of 3 beta-hydroxysteroid dehydrogenase/Delta 5--&gt;4-isomerase (OPG174) from Homo sapiens (Human).